Reading from the N-terminus, the 319-residue chain is Malate dehydrogenase (319 aa).

NAD(+) contacts are provided by residues 10-15 (GAGQIG) and aspartate 34. Positions 85 and 91 each coordinate substrate. NAD(+) is bound by residues asparagine 98 and 121 to 123 (ITN). 2 residues coordinate substrate: asparagine 123 and arginine 154. The active-site Proton acceptor is histidine 178.

Belongs to the LDH/MDH superfamily. MDH type 3 family.

It catalyses the reaction (S)-malate + NAD(+) = oxaloacetate + NADH + H(+). Its function is as follows. Catalyzes the reversible oxidation of malate to oxaloacetate. This is Malate dehydrogenase from Rhodospirillum centenum (strain ATCC 51521 / SW).